The chain runs to 249 residues: Thrombin-like enzyme barnettobin (249 aa).

The N-terminal stretch at 1-10 (APKELQVSYA) is a signal peptide. Residues 11–16 (HKSSEL) constitute a propeptide that is removed on maturation. Residues 17–240 (VIGGDECDIN…YPPWIQSIIA (224 aa)) form the Peptidase S1 domain. Intrachain disulfides connect Cys23–Cys154, Cys41–Cys57, Cys89–Cys247, Cys133–Cys201, Cys165–Cys180, and Cys191–Cys216. Residues His56 and Asp101 each act as charge relay system in the active site. N-linked (GlcNAc...) asparagine glycosylation is found at Asn145 and Asn161. Ser195 functions as the Charge relay system in the catalytic mechanism. Asn242 carries N-linked (GlcNAc...) asparagine glycosylation.

It belongs to the peptidase S1 family. Snake venom subfamily. As to quaternary structure, monomer. Glycoprotein, contains approx. 52% carbohydrate which could be removed by N-glycosidase. Glycosylation is important, since deglycosylated barnettobin loses its clotting and defibrinogenating effects. As to expression, expressed by the venom gland.

It localises to the secreted. Its activity is regulated as follows. Both coagulant and amidolytic activities are inhibited by PMSF. Amidolytic activity is partially inhibited by DTT, chymostatin, SBTI and TLCK, but not by heparin and EDTA. Functionally, thrombin-like snake venom serine protease that releases only fibrinopeptide A from human Aalpha chain of fibrinogen (specific coagulant activity was 251.7 NIH thrombin units/mg). Also shows fibrino(geno)lytic activities in vitro and defibrinogenating effects in vivo. This Bothrops barnetti (Barnett's lancehead) protein is Thrombin-like enzyme barnettobin.